Here is a 470-residue protein sequence, read N- to C-terminus: Methylenetetrahydrofolate--tRNA-(uracil-5-)-methyltransferase TrmFO (470 aa).

10-15 (GAGLAG) is an FAD binding site.

The protein belongs to the MnmG family. TrmFO subfamily. It depends on FAD as a cofactor.

It localises to the cytoplasm. The catalysed reaction is uridine(54) in tRNA + (6R)-5,10-methylene-5,6,7,8-tetrahydrofolate + NADH + H(+) = 5-methyluridine(54) in tRNA + (6S)-5,6,7,8-tetrahydrofolate + NAD(+). It carries out the reaction uridine(54) in tRNA + (6R)-5,10-methylene-5,6,7,8-tetrahydrofolate + NADPH + H(+) = 5-methyluridine(54) in tRNA + (6S)-5,6,7,8-tetrahydrofolate + NADP(+). In terms of biological role, catalyzes the folate-dependent formation of 5-methyl-uridine at position 54 (M-5-U54) in all tRNAs. This chain is Methylenetetrahydrofolate--tRNA-(uracil-5-)-methyltransferase TrmFO, found in Prochlorococcus marinus (strain MIT 9312).